The sequence spans 382 residues: uncharacterized protein (382 aa).

10 helical membrane passes run 8 to 28 (VLLL…LNTL), 41 to 61 (WQVG…TLIA), 73 to 93 (SYHC…LTVD), 94 to 114 (FWSW…IWVI), 133 to 153 (AAYM…LGIV), 157 to 177 (LLSV…PLLF), 208 to 228 (GCII…LYLS), 274 to 294 (VVIL…ALFI), 325 to 345 (ALLM…SLLM), and 349 to 369 (SDNL…MMLL).

It belongs to the major facilitator superfamily. YcaD (TC 2.A.1.26) family.

It localises to the cell inner membrane. This is an uncharacterized protein from Yersinia pseudotuberculosis serotype O:3 (strain YPIII).